Here is an 859-residue protein sequence, read N- to C-terminus: ATP-dependent DNA helicase PIF1 (859 aa).

Residues 1-45 (MPKWIRSTLNHIIPRRPFICSFNSFLLLKNVSHAKLSFSMSSRGF) constitute a mitochondrion transit peptide. Phosphoserine occurs at positions 70 and 72. Residues 142–157 (NSFDQSSQKKSRSTGF) show a composition bias toward polar residues. The interval 142-183 (NSFDQSSQKKSRSTGFKNPLRPALKKESSFDELQNSSISQER) is disordered. S169 is subject to Phosphoserine. A compositionally biased stretch (polar residues) spans 172 to 182 (DELQNSSISQE). 258-265 (GSAGTGKS) is an ATP binding site. S584 bears the Phosphoserine mark. The DNA-binding element occupies 727–746 (QAYVALSRAVSREGLQVLNF). The interval 782–859 (KRKLDYAPGP…GQDTEDHILE (78 aa)) is disordered. Positions 800-809 (KSNSPAPISA) are enriched in low complexity. Positions 844–859 (VSDEPRGQDTEDHILE) are enriched in basic and acidic residues.

The protein belongs to the helicase family. PIF1 subfamily. In terms of assembly, monomer in solution. DNA binding induces dimerization. Associates with mitochondrial and telomeric DNA. Binding to mtDNA is non-specific and the protein seems to coat the entire mtDNA molecule. Binds to the telomerase RNA TLC1. Interacts with the mitochondrial single-strand DNA-binding protein RIM1. It depends on Mg(2+) as a cofactor. Mn(2+) serves as cofactor. Post-translationally, phosphorylated. Undergoes RAD53-dependent phosphorylation in response to loss of mtDNA.

It localises to the nucleus. Its subcellular location is the nucleolus. The protein resides in the mitochondrion inner membrane. It carries out the reaction Couples ATP hydrolysis with the unwinding of duplex DNA at the replication fork by translocating in the 5'-3' direction. This creates two antiparallel DNA single strands (ssDNA). The leading ssDNA polymer is the template for DNA polymerase III holoenzyme which synthesizes a continuous strand.. It catalyses the reaction ATP + H2O = ADP + phosphate + H(+). Functionally, DNA-dependent ATPase and 5'-3' DNA helicase required for the maintenance of both mitochondrial and nuclear genome stability. Efficiently unwinds G-quadruplex (G4) DNA structures and forked RNA-DNA hybrids. Appears to move along DNA in single nucleotide or base pair steps, powered by hydrolysis of 1 molecule of ATP. Processes at an unwinding rate of about 75 bp/s. Resolves G4 structures, preventing replication pausing and double-strand breaks (DSBs) at G4 motifs. Involved in the maintenance of telomeric DNA. Inhibits telomere elongation, de novo telomere formation and telomere addition to DSBs via catalytic inhibition of telomerase. Reduces the processivity of telomerase by displacing active telomerase from DNA ends. Releases telomerase by unwinding the short telomerase RNA/telomeric DNA hybrid that is the intermediate in the telomerase reaction. Involved in the maintenance of ribosomal (rDNA). Required for efficient fork arrest at the replication fork barrier within rDNA. Involved in the maintenance of mitochondrial (mtDNA). Required to maintain mtDNA under conditions that introduce dsDNA breaks in mtDNA, either preventing or repairing dsDNA breaks. May inhibit replication progression to allow time for repair. May have a general role in chromosomal replication by affecting Okazaki fragment maturation. May have a role in conjunction with DNA2 helicase/nuclease in 5'-flap extension during Okazaki fragment processing. The protein is ATP-dependent DNA helicase PIF1 of Saccharomyces cerevisiae (strain YJM789) (Baker's yeast).